The sequence spans 600 residues: Elongation factor 4 (600 aa).

The tr-type G domain occupies serine 4–serine 186. GTP-binding positions include aspartate 16–threonine 21 and asparagine 133–aspartate 136.

This sequence belongs to the TRAFAC class translation factor GTPase superfamily. Classic translation factor GTPase family. LepA subfamily.

It is found in the cell membrane. It carries out the reaction GTP + H2O = GDP + phosphate + H(+). In terms of biological role, required for accurate and efficient protein synthesis under certain stress conditions. May act as a fidelity factor of the translation reaction, by catalyzing a one-codon backward translocation of tRNAs on improperly translocated ribosomes. Back-translocation proceeds from a post-translocation (POST) complex to a pre-translocation (PRE) complex, thus giving elongation factor G a second chance to translocate the tRNAs correctly. Binds to ribosomes in a GTP-dependent manner. The sequence is that of Elongation factor 4 from Mycoplasma mycoides subsp. mycoides SC (strain CCUG 32753 / NCTC 10114 / PG1).